We begin with the raw amino-acid sequence, 140 residues long: Large ribosomal subunit protein bL34m (140 aa).

The protein belongs to the bacterial ribosomal protein bL34 family. In terms of assembly, component of the mitochondrial large ribosomal subunit (mt-LSU). Mature N.crassa 74S mitochondrial ribosomes consist of a small (37S) and a large (54S) subunit. The 37S small subunit contains a 16S ribosomal RNA (16S mt-rRNA) and 32 different proteins. The 54S large subunit contains a 23S rRNA (23S mt-rRNA) and 42 different proteins.

It localises to the mitochondrion. Functionally, component of the mitochondrial ribosome (mitoribosome), a dedicated translation machinery responsible for the synthesis of mitochondrial genome-encoded proteins, including at least some of the essential transmembrane subunits of the mitochondrial respiratory chain. The mitoribosomes are attached to the mitochondrial inner membrane and translation products are cotranslationally integrated into the membrane. The chain is Large ribosomal subunit protein bL34m (mrpl34) from Neurospora crassa (strain ATCC 24698 / 74-OR23-1A / CBS 708.71 / DSM 1257 / FGSC 987).